The primary structure comprises 513 residues: Activin receptor type-2A (513 aa).

An N-terminal signal peptide occupies residues 1–19; sequence MGAAAKLAFAVFLISCSSG. The Extracellular segment spans residues 20–135; it reads AILGRSETQE…TSNPVTPKPP (116 aa). 5 disulfides stabilise this stretch: C30–C60, C50–C78, C85–C104, C91–C103, and C105–C110. 2 N-linked (GlcNAc...) asparagine glycosylation sites follow: N43 and N66. A helical membrane pass occupies residues 136-161; it reads YYNILLYSLVPLMLIAGIVICAFWVY. Topologically, residues 162–513 are cytoplasmic; the sequence is RHHMMAYPPV…VDFPPKESSL (352 aa). The Protein kinase domain occupies 192–485; it reads LQLLEVKARG…GERITQMQRL (294 aa). Residues 198-206 and K219 contribute to the ATP site; that span reads KARGRFGCV. The active-site Proton acceptor is the D322.

Belongs to the protein kinase superfamily. TKL Ser/Thr protein kinase family. TGFB receptor subfamily. As to quaternary structure, part of a complex consisting of MAGI2/ARIP1, ACVR2A, ACVR1B and SMAD3. Interacts with MAGI2/ARIP1. Interacts with type I receptor ACVR1. Interacts with BMP7. Interacts with TSC22D1/TSC-22. Interacts with activin A/INHBA. Mg(2+) serves as cofactor. The cofactor is Mn(2+).

It is found in the cell membrane. It catalyses the reaction L-threonyl-[receptor-protein] + ATP = O-phospho-L-threonyl-[receptor-protein] + ADP + H(+). The enzyme catalyses L-seryl-[receptor-protein] + ATP = O-phospho-L-seryl-[receptor-protein] + ADP + H(+). Functionally, on ligand binding, forms a receptor complex consisting of two type II and two type I transmembrane serine/threonine kinases. Type II receptors phosphorylate and activate type I receptors which autophosphorylate, then bind and activate SMAD transcriptional regulators. Receptor for activin A, activin B and inhibin A. Mediates induction of adipogenesis by GDF6. This chain is Activin receptor type-2A, found in Rattus norvegicus (Rat).